Reading from the N-terminus, the 356-residue chain is 5-formaminoimidazole-4-carboxamide-1-(beta)-D-ribofuranosyl 5'-monophosphate synthetase (356 aa).

Residues His-27 and Ser-94 each contribute to the 5-amino-1-(5-phospho-beta-D-ribosyl)imidazole-4-carboxamide site. In terms of domain architecture, ATP-grasp spans 101–333; that stretch reads TENFADMAVP…YADLMEENLS (233 aa). Residues 145 to 196 and Glu-226 each bind ATP; that span reads PHDI…TRYY. Asn-255 is a binding site for 5-amino-1-(5-phospho-beta-D-ribosyl)imidazole-4-carboxamide. Residues Glu-293 and Glu-306 each coordinate Mg(2+).

Belongs to the phosphohexose mutase family. Mg(2+) serves as cofactor. It depends on Mn(2+) as a cofactor.

The enzyme catalyses 5-amino-1-(5-phospho-beta-D-ribosyl)imidazole-4-carboxamide + formate + ATP = 5-formamido-1-(5-phospho-D-ribosyl)imidazole-4-carboxamide + ADP + phosphate. The protein operates within purine metabolism; IMP biosynthesis via de novo pathway; 5-formamido-1-(5-phospho-D-ribosyl)imidazole-4-carboxamide from 5-amino-1-(5-phospho-D-ribosyl)imidazole-4-carboxamide (formate route): step 1/1. Its function is as follows. Catalyzes the ATP- and formate-dependent formylation of 5-aminoimidazole-4-carboxamide-1-beta-d-ribofuranosyl 5'-monophosphate (AICAR) to 5-formaminoimidazole-4-carboxamide-1-beta-d-ribofuranosyl 5'-monophosphate (FAICAR) in the absence of folates. In Methanosarcina barkeri (strain Fusaro / DSM 804), this protein is 5-formaminoimidazole-4-carboxamide-1-(beta)-D-ribofuranosyl 5'-monophosphate synthetase.